Reading from the N-terminus, the 320-residue chain is Serpentine receptor class gamma-17 (320 aa).

A run of 6 helical transmembrane segments spans residues 25–45 (AIYF…ISLL), 80–100 (IFFG…STFF), 155–175 (FIML…QVIA), 192–212 (WASL…FTIV), 237–257 (FTSI…LTFA), and 268–288 (YILQ…IMFL).

This sequence belongs to the nematode receptor-like protein srg family.

Its subcellular location is the membrane. This is Serpentine receptor class gamma-17 (srg-17) from Caenorhabditis elegans.